The chain runs to 305 residues: Ornithine carbamoyltransferase (305 aa).

Residues 52-55 (STRT), Gln79, Arg103, and 130-133 (HPCQ) contribute to the carbamoyl phosphate site. L-ornithine is bound by residues Asn161, Asp221, and 225–226 (SM). Residues 261 to 262 (CL) and Arg289 contribute to the carbamoyl phosphate site.

This sequence belongs to the aspartate/ornithine carbamoyltransferase superfamily. OTCase family.

Its subcellular location is the cytoplasm. The enzyme catalyses carbamoyl phosphate + L-ornithine = L-citrulline + phosphate + H(+). It functions in the pathway amino-acid biosynthesis; L-arginine biosynthesis; L-arginine from L-ornithine and carbamoyl phosphate: step 1/3. Its function is as follows. Reversibly catalyzes the transfer of the carbamoyl group from carbamoyl phosphate (CP) to the N(epsilon) atom of ornithine (ORN) to produce L-citrulline. The sequence is that of Ornithine carbamoyltransferase from Methanocorpusculum labreanum (strain ATCC 43576 / DSM 4855 / Z).